A 396-amino-acid chain; its full sequence is Pectinesterase (396 aa).

The signal sequence occupies residues 1-21; that stretch reads MQSKTLYLKATALLGGCTVFA. Thr174 serves as a coordination point for substrate. Asp232 acts as the Proton donor in catalysis. The Nucleophile role is filled by Asp259. Residues Arg324 and Trp326 each contribute to the substrate site.

It belongs to the pectinesterase family.

It localises to the secreted. It carries out the reaction [(1-&gt;4)-alpha-D-galacturonosyl methyl ester](n) + n H2O = [(1-&gt;4)-alpha-D-galacturonosyl](n) + n methanol + n H(+). It participates in glycan metabolism; pectin degradation; 2-dehydro-3-deoxy-D-gluconate from pectin: step 1/5. Its function is as follows. Involved in maceration and soft-rotting of plant tissue. The protein is Pectinesterase (pme) of Ralstonia nicotianae (strain ATCC BAA-1114 / GMI1000) (Ralstonia solanacearum).